The sequence spans 445 residues: tRNA modification GTPase MnmE (445 aa).

Arg20, Glu79, and Lys119 together coordinate (6S)-5-formyl-5,6,7,8-tetrahydrofolate. The TrmE-type G domain occupies 215–371 (GLKLAIIGPP…ILKNIENIAE (157 aa)). Asn225 contacts K(+). GTP is bound by residues 225-230 (NVGKSS), 244-250 (SNIAGTT), and 269-272 (DTAG). Residue Ser229 coordinates Mg(2+). The K(+) site is built by Ser244, Ile246, and Thr249. A Mg(2+)-binding site is contributed by Thr250. (6S)-5-formyl-5,6,7,8-tetrahydrofolate is bound at residue Lys445.

It belongs to the TRAFAC class TrmE-Era-EngA-EngB-Septin-like GTPase superfamily. TrmE GTPase family. As to quaternary structure, homodimer. Heterotetramer of two MnmE and two MnmG subunits. K(+) is required as a cofactor.

The protein localises to the cytoplasm. Exhibits a very high intrinsic GTPase hydrolysis rate. Involved in the addition of a carboxymethylaminomethyl (cmnm) group at the wobble position (U34) of certain tRNAs, forming tRNA-cmnm(5)s(2)U34. In Rickettsia conorii (strain ATCC VR-613 / Malish 7), this protein is tRNA modification GTPase MnmE.